The following is a 117-amino-acid chain: Large ribosomal subunit protein bL20 (117 aa).

It belongs to the bacterial ribosomal protein bL20 family.

In terms of biological role, binds directly to 23S ribosomal RNA and is necessary for the in vitro assembly process of the 50S ribosomal subunit. It is not involved in the protein synthesizing functions of that subunit. The polypeptide is Large ribosomal subunit protein bL20 (rplT) (Synechocystis sp. (strain ATCC 27184 / PCC 6803 / Kazusa)).